Here is a 451-residue protein sequence, read N- to C-terminus: Chromosomal replication initiator protein DnaA 2 (451 aa).

Positions 1–68 (MQAWEEFLKA…QQKFINGNNK (68 aa)) are domain I, interacts with DnaA modulators. Residues 68–104 (KRIKIHLSVANTPQRAKKTKTANKEKDFKAPFELTFD) form a domain II region. Residues 105–326 (ELDPLCLFPY…KGLEALVLRL (222 aa)) form a domain III, AAA+ region region. Positions 156, 158, 159, and 160 each coordinate ATP. Residues 327–451 (HLDAKHSITA…CHIILKKLQG (125 aa)) form a domain IV, binds dsDNA region.

The protein belongs to the DnaA family. In terms of assembly, oligomerizes as a right-handed, spiral filament on DNA at oriC.

It localises to the cytoplasm. Plays an essential role in the initiation and regulation of chromosomal replication. ATP-DnaA binds to the origin of replication (oriC) to initiate formation of the DNA replication initiation complex once per cell cycle. Binds the DnaA box (a 9 base pair repeat at the origin) and separates the double-stranded (ds)DNA. Forms a right-handed helical filament on oriC DNA; dsDNA binds to the exterior of the filament while single-stranded (ss)DNA is stabiized in the filament's interior. The ATP-DnaA-oriC complex binds and stabilizes one strand of the AT-rich DNA unwinding element (DUE), permitting loading of DNA polymerase. After initiation quickly degrades to an ADP-DnaA complex that is not apt for DNA replication. Binds acidic phospholipids. The sequence is that of Chromosomal replication initiator protein DnaA 2 from Protochlamydia amoebophila (strain UWE25).